Reading from the N-terminus, the 458-residue chain is tRNA modification GTPase MnmE (458 aa).

Residues arginine 22, glutamate 84, and arginine 123 each coordinate (6S)-5-formyl-5,6,7,8-tetrahydrofolate. A TrmE-type G domain is found at 220–379 (GIATAIIGRP…LEKAIADLFF (160 aa)). Asparagine 230 provides a ligand contact to K(+). Residues 230-235 (NVGKSS), 249-255 (TDIAGTT), and 274-277 (DTAG) each bind GTP. Serine 234 contributes to the Mg(2+) binding site. Threonine 249, isoleucine 251, and threonine 254 together coordinate K(+). Residue threonine 255 coordinates Mg(2+). Lysine 458 provides a ligand contact to (6S)-5-formyl-5,6,7,8-tetrahydrofolate.

The protein belongs to the TRAFAC class TrmE-Era-EngA-EngB-Septin-like GTPase superfamily. TrmE GTPase family. Homodimer. Heterotetramer of two MnmE and two MnmG subunits. K(+) is required as a cofactor.

The protein localises to the cytoplasm. Exhibits a very high intrinsic GTPase hydrolysis rate. Involved in the addition of a carboxymethylaminomethyl (cmnm) group at the wobble position (U34) of certain tRNAs, forming tRNA-cmnm(5)s(2)U34. This chain is tRNA modification GTPase MnmE, found in Bacillus cytotoxicus (strain DSM 22905 / CIP 110041 / 391-98 / NVH 391-98).